The following is a 136-amino-acid chain: NADPH-dependent 7-cyano-7-deazaguanine reductase (136 aa).

The Thioimide intermediate role is filled by Cys-50. The active-site Proton donor is Asp-57. Substrate is bound by residues 72 to 74 (YEL) and 91 to 92 (HE).

The protein belongs to the GTP cyclohydrolase I family. QueF type 1 subfamily.

The protein localises to the cytoplasm. The catalysed reaction is 7-aminomethyl-7-carbaguanine + 2 NADP(+) = 7-cyano-7-deazaguanine + 2 NADPH + 3 H(+). It participates in tRNA modification; tRNA-queuosine biosynthesis. In terms of biological role, catalyzes the NADPH-dependent reduction of 7-cyano-7-deazaguanine (preQ0) to 7-aminomethyl-7-deazaguanine (preQ1). The chain is NADPH-dependent 7-cyano-7-deazaguanine reductase from Prochlorococcus marinus (strain MIT 9312).